The primary structure comprises 249 residues: Segregation and condensation protein A (249 aa).

This sequence belongs to the ScpA family. In terms of assembly, component of a cohesin-like complex composed of ScpA, ScpB and the Smc homodimer, in which ScpA and ScpB bind to the head domain of Smc. The presence of the three proteins is required for the association of the complex with DNA.

Its subcellular location is the cytoplasm. In terms of biological role, participates in chromosomal partition during cell division. May act via the formation of a condensin-like complex containing Smc and ScpB that pull DNA away from mid-cell into both cell halves. This is Segregation and condensation protein A from Mycoplasmopsis pulmonis (strain UAB CTIP) (Mycoplasma pulmonis).